The chain runs to 125 residues: Protein Bouncer (125 aa).

The signal sequence occupies residues Met1–Pro18. Intrachain disulfides connect Cys23–Cys48, Cys26–Cys35, Cys42–Cys66, Cys72–Cys91, and Cys92–Cys97. A UPAR/Ly6 domain is found at Cys23–Asn98. The N-linked (GlcNAc...) asparagine glycan is linked to Asn32. Asn84 carries N-linked (GlcNAc...) asparagine glycosylation. Asn98 carries GPI-anchor amidated asparagine lipidation. Residues Ser99 to Leu125 constitute a propeptide, removed in mature form.

This sequence belongs to the SPACA4/bouncer family. In terms of assembly, interacts with spermatocyte complex composed of izumo1, spaca6 and tmem81. In terms of processing, N-glycosylated. Highly expressed in oocytes. Not expressed in testis.

Its subcellular location is the cell membrane. In terms of biological role, oocyte-expressed fertilization factor that mediates sperm-egg binding and is essential for sperm entry into the egg. Necessary and sufficient to mediate species-specific gamete recognition and fertilization, which is essential for vertebrate species performing external fertilization. External fertilization cannot guarantee that only conspecific sperm reaches the egg by precopulatory mate choice: proteins such as Bouncer can therefore support the selection of conspecific sperm. This is Protein Bouncer from Danio rerio (Zebrafish).